A 380-amino-acid polypeptide reads, in one-letter code: Cystathionine beta-lyase (380 aa).

An N6-(pyridoxal phosphate)lysine modification is found at Lys-196.

The protein belongs to the trans-sulfuration enzymes family. Requires pyridoxal 5'-phosphate as cofactor.

It localises to the cytoplasm. It carries out the reaction L,L-cystathionine + H2O = L-homocysteine + pyruvate + NH4(+). It catalyses the reaction an S-substituted L-cysteine + H2O = a thiol + pyruvate + NH4(+). It functions in the pathway amino-acid biosynthesis; L-methionine biosynthesis via de novo pathway; L-homocysteine from L-cystathionine: step 1/1. The enzymatic degradation of amino acids in cheese is believed to generate aroma compounds and therefore to be essential for flavor development. Cystathionine beta-lyase (CBL) can convert cystathionine to homocysteine but is also able to catalyze an alpha, gamma elimination. With methionine as a substrate, it produces volatile sulfur compounds which are important for flavor formation in Gouda cheese. In Lactococcus lactis subsp. lactis (strain IL1403) (Streptococcus lactis), this protein is Cystathionine beta-lyase (metC).